Reading from the N-terminus, the 76-residue chain is MSNIEERVIKVIAEQLNVDEGQVKADAHFIDDLGADSLDLVELVMTLEKEFDCEIPDEEAEKITTVQSAIDFVKSR.

Positions 2–76 constitute a Carrier domain; sequence SNIEERVIKV…QSAIDFVKSR (75 aa). O-(pantetheine 4'-phosphoryl)serine is present on Ser-37.

The protein belongs to the acyl carrier protein (ACP) family. In terms of processing, 4'-phosphopantetheine is transferred from CoA to a specific serine of apo-ACP by AcpS. This modification is essential for activity because fatty acids are bound in thioester linkage to the sulfhydryl of the prosthetic group.

Its subcellular location is the cytoplasm. Its pathway is lipid metabolism; fatty acid biosynthesis. In terms of biological role, carrier of the growing fatty acid chain in fatty acid biosynthesis. The sequence is that of Acyl carrier protein from Dichelobacter nodosus (strain VCS1703A).